The chain runs to 226 residues: Small ribosomal subunit protein uS3 (226 aa).

A KH type-2 domain is found at 39-107; that stretch reads IRAYIKKNVV…EVTLNIKEVK (69 aa).

It belongs to the universal ribosomal protein uS3 family. As to quaternary structure, part of the 30S ribosomal subunit. Forms a tight complex with proteins S10 and S14.

Binds the lower part of the 30S subunit head. Binds mRNA in the 70S ribosome, positioning it for translation. This chain is Small ribosomal subunit protein uS3, found in Pelagibacter ubique (strain HTCC1062).